The sequence spans 274 residues: Large ribosomal subunit protein uL2 (274 aa).

2 disordered regions span residues 34–54 (LEKK…TRHI) and 224–261 (VAMN…KTRA).

It belongs to the universal ribosomal protein uL2 family. In terms of assembly, part of the 50S ribosomal subunit. Forms a bridge to the 30S subunit in the 70S ribosome.

Functionally, one of the primary rRNA binding proteins. Required for association of the 30S and 50S subunits to form the 70S ribosome, for tRNA binding and peptide bond formation. It has been suggested to have peptidyltransferase activity; this is somewhat controversial. Makes several contacts with the 16S rRNA in the 70S ribosome. The polypeptide is Large ribosomal subunit protein uL2 (Ectopseudomonas mendocina (strain ymp) (Pseudomonas mendocina)).